Here is a 53-residue protein sequence, read N- to C-terminus: Rubredoxin (53 aa).

The region spanning 1-53 (MQKYVCDICGYVYDPAVGDPDNGVAPGTAFADLPEDWVCPECGVSKDEFSPEA) is the Rubredoxin-like domain. Residues Cys-6, Cys-9, Cys-39, and Cys-42 each contribute to the Fe cation site.

The protein belongs to the rubredoxin family. Requires Fe(3+) as cofactor.

In terms of biological role, rubredoxin is a small nonheme, iron protein lacking acid-labile sulfide. Its single Fe, chelated to 4 Cys, functions as an electron acceptor and may also stabilize the conformation of the molecule. The chain is Rubredoxin from Butyribacterium methylotrophicum.